A 481-amino-acid chain; its full sequence is GTPase Der (481 aa).

EngA-type G domains lie at 47–210 (PVLA…PDVS) and 221–394 (RRVA…ESWE). Residues 53-60 (GRPNVGKS), 100-104 (DTGGW), 162-165 (NKVD), 227-234 (GRPNVGKS), 274-278 (DTAGI), and 339-342 (NKWD) each bind GTP. Positions 395-477 (TRIPTGKFNA…PIVLNMRVRE (83 aa)) constitute a KH-like domain.

Belongs to the TRAFAC class TrmE-Era-EngA-EngB-Septin-like GTPase superfamily. EngA (Der) GTPase family. As to quaternary structure, associates with the 50S ribosomal subunit.

Functionally, GTPase that plays an essential role in the late steps of ribosome biogenesis. The chain is GTPase Der from Leifsonia xyli subsp. xyli (strain CTCB07).